We begin with the raw amino-acid sequence, 433 residues long: AP-2 complex subunit mu (433 aa).

The 265-residue stretch at 168–432 (RNELFLDVLE…IGRSGIYETR (265 aa)) folds into the MHD domain. Lysine 339, lysine 343, and lysine 352 together coordinate a 1,2-diacyl-sn-glycero-3-phospho-(1D-myo-inositol-3,4,5-trisphosphate).

Belongs to the adaptor complexes medium subunit family. As to quaternary structure, adaptor protein complex 2 (AP-2) is a heterotetramer composed of two large adaptins (alpha-type subunit and beta-type subunit), a medium adaptin (mu-type subunit) and a small adaptin (sigma-type subunit).

The protein resides in the cell membrane. It localises to the membrane. The protein localises to the coated pit. In terms of biological role, component of the adaptor complexes which link clathrin to receptors in coated vesicles. Clathrin-associated protein complexes are believed to interact with the cytoplasmic tails of membrane proteins, leading to their selection and concentration. AP50 is a subunit of the plasma membrane adaptor. The complex binds polyphosphoinositide-containing lipids. The chain is AP-2 complex subunit mu (AP2M1) from Gallus gallus (Chicken).